The sequence spans 400 residues: Delta(12) fatty acid desaturase (400 aa).

A helical membrane pass occupies residues 91 to 111 (LAWPAYWIMQGIVCTGIWVLA). The Histidine box-1 motif lies at 112-116 (HECGH). The Histidine box-2 signature appears at 148–152 (HSKHH). Transmembrane regions (helical) follow at residues 199–219 (IVTL…YLIM), 245–265 (FFDI…LIYA), and 277–297 (YYIV…FLQH). The short motif at 339 to 343 (HVAHH) is the Histidine box-3 element.

It belongs to the fatty acid desaturase type 1 family.

The protein localises to the membrane. It catalyses the reaction (9Z)-octadecenoyl-CoA + 2 Fe(II)-[cytochrome b5] + O2 + 2 H(+) = (9Z,12Z)-octadecadienoyl-CoA + 2 Fe(III)-[cytochrome b5] + 2 H2O. The enzyme catalyses (9Z)-hexadecenoyl-CoA + 2 Fe(II)-[cytochrome b5] + O2 + 2 H(+) = (9Z,12Z)-hexadecadienoyl-CoA + 2 Fe(III)-[cytochrome b5] + 2 H2O. The protein operates within lipid metabolism; polyunsaturated fatty acid biosynthesis. Its function is as follows. Catalyzes the desaturation of oleic acid (Delta(9)-18:1) to linoleic acid (Delta(9), Delta(12)-18:2). The protein is Delta(12) fatty acid desaturase of Mortierella alpina (Oleaginous fungus).